The primary structure comprises 906 residues: Cadherin-2 (906 aa).

The N-terminal stretch at 1–25 is a signal peptide; the sequence is MCRIAGAPRTLLPLLAALLQASVEA. A propeptide spanning residues 26–159 is cleaved from the precursor; the sequence is SGEIALCKTG…HNGYLQRQKR (134 aa). Residues Ser96 and Ser135 each carry the phosphoserine modification. 5 consecutive Cadherin domains span residues 160 to 267, 268 to 382, 383 to 497, 498 to 603, and 604 to 714; these read DWVI…RPEF, LHQV…PPEF, TAMT…NPYF, APNP…DNAP, and QVLP…DVDR. Over 160-724 the chain is Extracellular; it reads DWVIPPINLP…IVGAGLGTGA (565 aa). Ca(2+) is bound at residue Glu170. Asn190 carries an N-linked (GlcNAc...) asparagine glycan. Ca(2+) contacts are provided by Asp226, Glu228, Asp259, Met260, Asn261, Asp262, and Asn263. Asn273 carries N-linked (GlcNAc...) asparagine glycosylation. Ca(2+) is bound by residues Asp293, Asp295, and Asn301. Asn325 carries N-linked (GlcNAc...) asparagine glycosylation. Ca(2+) is bound at residue Asp353. Residues Asn402, Asn572, Asn622, Asn651, and Asn692 are each glycosylated (N-linked (GlcNAc...) asparagine). The helical transmembrane segment at 725 to 745 threads the bilayer; that stretch reads IIAILLCIIILLILVLMFVVW. Residues 746–906 are Cytoplasmic-facing; the sequence is MKRRDKERQA…LAEMYGGGDD (161 aa). A compositionally biased stretch (low complexity) spans 863–880; sequence SGSTAGSLSSLNSSSSGG. A disordered region spans residues 863-884; the sequence is SGSTAGSLSSLNSSSSGGEQDY.

Homodimer (via extracellular region). Can also form heterodimers with other cadherins (via extracellular region). Dimerization occurs in trans, i.e. with a cadherin chain from another cell. Interacts with CDCP1. Interacts with PCDH8; this complex may also include TAOK2. The interaction with PCDH8 may lead to internalization through TAOK2/p38 MAPK pathway. Identified in a complex containing FGFR4, NCAM1, CDH2, PLCG1, FRS2, SRC, SHC1, GAP43 and CTTN. May interact with OBSCN (via protein kinase domain 2). Interacts with FBXO45. Post-translationally, cleaved by MMP24. Ectodomain cleavage leads to the generation of a soluble 90 kDa N-terminal soluble fragment and a 45 kDa membrane-bound C-terminal fragment 1 (CTF1), which is further cleaved by gamma-secretase into a 35 kDa. Cleavage in neural stem cells by MMP24 affects CDH2-mediated anchorage of neural stem cells to ependymocytes in the adult subependymal zone, leading to modulate neural stem cell quiescence. May be phosphorylated by OBSCN.

It is found in the cell membrane. The protein localises to the sarcolemma. Its subcellular location is the cell junction. It localises to the cell surface. The protein resides in the desmosome. It is found in the adherens junction. In terms of biological role, calcium-dependent cell adhesion protein; preferentially mediates homotypic cell-cell adhesion by dimerization with a CDH2 chain from another cell. Cadherins may thus contribute to the sorting of heterogeneous cell types. Acts as a regulator of neural stem cells quiescence by mediating anchorage of neural stem cells to ependymocytes in the adult subependymal zone: upon cleavage by MMP24, CDH2-mediated anchorage is affected, leading to modulate neural stem cell quiescence. Plays a role in cell-to-cell junction formation between pancreatic beta cells and neural crest stem (NCS) cells, promoting the formation of processes by NCS cells. Required for proper neurite branching. Required for pre- and postsynaptic organization. CDH2 may be involved in neuronal recognition mechanism. In hippocampal neurons, may regulate dendritic spine density. In Otolemur garnettii (Small-eared galago), this protein is Cadherin-2 (CDH2).